A 190-amino-acid chain; its full sequence is UPF0200 protein TGAM_0868 (190 aa).

7–14 (GMPGSGKS) is an ATP binding site.

The protein belongs to the UPF0200 family.

This chain is UPF0200 protein TGAM_0868, found in Thermococcus gammatolerans (strain DSM 15229 / JCM 11827 / EJ3).